The sequence spans 320 residues: Ribose-phosphate pyrophosphokinase (320 aa).

ATP is bound by residues 43 to 45 and 102 to 103; these read DGE and RQ. Residues histidine 136 and aspartate 178 each coordinate Mg(2+). The active site involves lysine 201. Residues arginine 203, aspartate 227, and 231–235 each bind D-ribose 5-phosphate; that span reads DTAGT.

It belongs to the ribose-phosphate pyrophosphokinase family. Class I subfamily. In terms of assembly, homohexamer. Mg(2+) is required as a cofactor.

It is found in the cytoplasm. The enzyme catalyses D-ribose 5-phosphate + ATP = 5-phospho-alpha-D-ribose 1-diphosphate + AMP + H(+). The protein operates within metabolic intermediate biosynthesis; 5-phospho-alpha-D-ribose 1-diphosphate biosynthesis; 5-phospho-alpha-D-ribose 1-diphosphate from D-ribose 5-phosphate (route I): step 1/1. In terms of biological role, involved in the biosynthesis of the central metabolite phospho-alpha-D-ribosyl-1-pyrophosphate (PRPP) via the transfer of pyrophosphoryl group from ATP to 1-hydroxyl of ribose-5-phosphate (Rib-5-P). The chain is Ribose-phosphate pyrophosphokinase from Clostridium tetani (strain Massachusetts / E88).